The chain runs to 175 residues: NADH-quinone oxidoreductase subunit I (175 aa).

2 consecutive 4Fe-4S ferredoxin-type domains span residues 64 to 93 (KRDE…IIAD) and 110 to 139 (SLYE…LTEE). The [4Fe-4S] cluster site is built by Cys-73, Cys-76, Cys-79, Cys-83, Cys-119, Cys-122, Cys-125, and Cys-129.

Belongs to the complex I 23 kDa subunit family. NDH-1 is composed of 14 different subunits. Subunits NuoA, H, J, K, L, M, N constitute the membrane sector of the complex. [4Fe-4S] cluster is required as a cofactor.

The protein localises to the cell inner membrane. It catalyses the reaction a quinone + NADH + 5 H(+)(in) = a quinol + NAD(+) + 4 H(+)(out). Functionally, NDH-1 shuttles electrons from NADH, via FMN and iron-sulfur (Fe-S) centers, to quinones in the respiratory chain. The immediate electron acceptor for the enzyme in this species is believed to be ubiquinone. Couples the redox reaction to proton translocation (for every two electrons transferred, four hydrogen ions are translocated across the cytoplasmic membrane), and thus conserves the redox energy in a proton gradient. The chain is NADH-quinone oxidoreductase subunit I from Cytophaga hutchinsonii (strain ATCC 33406 / DSM 1761 / CIP 103989 / NBRC 15051 / NCIMB 9469 / D465).